We begin with the raw amino-acid sequence, 188 residues long: Ribosome maturation factor RimM (188 aa).

Positions 96-169 (DDEFYYADLE…TLLIDPLAAG (74 aa)) constitute a PRC barrel domain.

Belongs to the RimM family. Binds ribosomal protein uS19.

The protein resides in the cytoplasm. In terms of biological role, an accessory protein needed during the final step in the assembly of 30S ribosomal subunit, possibly for assembly of the head region. Essential for efficient processing of 16S rRNA. May be needed both before and after RbfA during the maturation of 16S rRNA. It has affinity for free ribosomal 30S subunits but not for 70S ribosomes. This is Ribosome maturation factor RimM from Rhizobium etli (strain ATCC 51251 / DSM 11541 / JCM 21823 / NBRC 15573 / CFN 42).